The primary structure comprises 85 residues: Large ribosomal subunit protein bL27 (85 aa).

Residues 1 to 22 (MAHKKAGGSTNNGRDSESKRLG) are disordered.

It belongs to the bacterial ribosomal protein bL27 family.

In Vibrio atlanticus (strain LGP32) (Vibrio splendidus (strain Mel32)), this protein is Large ribosomal subunit protein bL27.